The sequence spans 513 residues: Flagellin A (513 aa).

It belongs to the bacterial flagellin family. As to quaternary structure, heteromer of FlaA and FlaB. FlaB is located proximal to the hook while the remainder of the filament is composed of the predominant FlaA.

The protein resides in the secreted. It is found in the bacterial flagellum. Flagellin is the subunit protein which polymerizes to form the filaments of bacterial flagella. Important for motility and virulence. The protein is Flagellin A (flaA) of Helicobacter felis (strain ATCC 49179 / CCUG 28539 / NCTC 12436 / CS1).